The sequence spans 330 residues: Methionyl-tRNA formyltransferase (330 aa).

Residue 112–115 (SLLP) coordinates (6S)-5,6,7,8-tetrahydrofolate.

The protein belongs to the Fmt family.

The enzyme catalyses L-methionyl-tRNA(fMet) + (6R)-10-formyltetrahydrofolate = N-formyl-L-methionyl-tRNA(fMet) + (6S)-5,6,7,8-tetrahydrofolate + H(+). In terms of biological role, attaches a formyl group to the free amino group of methionyl-tRNA(fMet). The formyl group appears to play a dual role in the initiator identity of N-formylmethionyl-tRNA by promoting its recognition by IF2 and preventing the misappropriation of this tRNA by the elongation apparatus. The protein is Methionyl-tRNA formyltransferase of Synechococcus sp. (strain RCC307).